Reading from the N-terminus, the 61-residue chain is MEWLADYWWIILLILVGMIISGIKELRRVDVKRYLADKPELPPHRDNNAEWDDDDDWPKKK.

The helical transmembrane segment at 3 to 23 (WLADYWWIILLILVGMIISGI) threads the bilayer. Residues 38 to 48 (KPELPPHRDNN) show a composition bias toward basic and acidic residues. Positions 38–61 (KPELPPHRDNNAEWDDDDDWPKKK) are disordered. The span at 49–61 (AEWDDDDDWPKKK) shows a compositional bias: acidic residues.

The protein belongs to the UPF0370 family.

It is found in the cell membrane. The polypeptide is UPF0370 protein Spro_3503 (Serratia proteamaculans (strain 568)).